The sequence spans 492 residues: Bifunctional purine biosynthesis protein PurH (492 aa).

The MGS-like domain occupies 1 to 144 (MKKAILSVSN…KNYKHVTTIV (144 aa)).

Belongs to the PurH family.

The enzyme catalyses (6R)-10-formyltetrahydrofolate + 5-amino-1-(5-phospho-beta-D-ribosyl)imidazole-4-carboxamide = 5-formamido-1-(5-phospho-D-ribosyl)imidazole-4-carboxamide + (6S)-5,6,7,8-tetrahydrofolate. It catalyses the reaction IMP + H2O = 5-formamido-1-(5-phospho-D-ribosyl)imidazole-4-carboxamide. Its pathway is purine metabolism; IMP biosynthesis via de novo pathway; 5-formamido-1-(5-phospho-D-ribosyl)imidazole-4-carboxamide from 5-amino-1-(5-phospho-D-ribosyl)imidazole-4-carboxamide (10-formyl THF route): step 1/1. It participates in purine metabolism; IMP biosynthesis via de novo pathway; IMP from 5-formamido-1-(5-phospho-D-ribosyl)imidazole-4-carboxamide: step 1/1. The chain is Bifunctional purine biosynthesis protein PurH from Staphylococcus aureus (strain bovine RF122 / ET3-1).